The primary structure comprises 586 residues: Inner membrane protein YejM (586 aa).

Residues 1-20 (MVTHRQRYREKVSQMVSWGH) lie on the Cytoplasmic side of the membrane. The chain crosses the membrane as a helical span at residues 21-43 (WFALFNILLATLLGSRYLFVADW). Topologically, residues 44–57 (PTTLAGRIYSYLSI) are periplasmic. The helical transmembrane segment at 58–80 (VGHFSFLVFATYLLILFPLTFIV) threads the bilayer. Topologically, residues 81-84 (MSQR) are cytoplasmic. Residues 85–103 (LMRFLSAILATAGMTLLLI) form a helical membrane-spanning segment. Topologically, residues 104-134 (DSEVFTRFHLHLNPIVWELVINPDQNEMARD) are periplasmic. A helical transmembrane segment spans residues 135 to 157 (WQLMFISVPVILLIEMLFATWSW). Topologically, residues 158 to 168 (QKLRSLTRRRH) are cytoplasmic. A helical transmembrane segment spans residues 169-191 (FARPLAAFFFVSFIASHLIYIWA). The Periplasmic portion of the chain corresponds to 192–586 (DANFYRPITM…LTEEKRFIAN (395 aa)).

The protein to H.influenzae HI_0842.

It localises to the cell inner membrane. In Salmonella typhi, this protein is Inner membrane protein YejM (yejM).